A 345-amino-acid polypeptide reads, in one-letter code: Phosphoribosylformylglycinamidine cyclo-ligase (345 aa).

The protein belongs to the AIR synthase family. As to quaternary structure, homodimer.

The protein resides in the cytoplasm. It carries out the reaction 2-formamido-N(1)-(5-O-phospho-beta-D-ribosyl)acetamidine + ATP = 5-amino-1-(5-phospho-beta-D-ribosyl)imidazole + ADP + phosphate + H(+). It functions in the pathway purine metabolism; IMP biosynthesis via de novo pathway; 5-amino-1-(5-phospho-D-ribosyl)imidazole from N(2)-formyl-N(1)-(5-phospho-D-ribosyl)glycinamide: step 2/2. This Escherichia coli O157:H7 protein is Phosphoribosylformylglycinamidine cyclo-ligase.